The chain runs to 367 residues: Protein NDRG4-B (367 aa).

Over residues 1–12 (MSELRFPEEKPL) the composition is skewed to basic and acidic residues. Disordered stretches follow at residues 1–21 (MSEL…TEME) and 333–367 (LTSA…EVSC). Over residues 347–367 (CTQSESSDGIGQINHTMEVSC) the composition is skewed to polar residues.

The protein belongs to the NDRG family.

Its subcellular location is the cytoplasm. The protein resides in the cytosol. Functionally, contributes to the maintenance of intracerebral BDNF levels within the normal range. May enhance growth factor-induced ERK1 and ERK2 phosphorylation. May attenuate growth factor-promoted ELK1 phosphorylation in a microtubule-dependent manner. This chain is Protein NDRG4-B (ndrg4-b), found in Xenopus laevis (African clawed frog).